The chain runs to 279 residues: Ribose-phosphate pyrophosphokinase (279 aa).

Residues 31–33 and 88–89 contribute to the ATP site; these read DGE and RQ. Residues H121 and D159 each coordinate Mg(2+). K182 is a catalytic residue. D-ribose 5-phosphate is bound by residues R184, D208, and 212–216; that span reads STGGT.

The protein belongs to the ribose-phosphate pyrophosphokinase family. Class III (archaeal) subfamily. The cofactor is Mg(2+).

The protein resides in the cytoplasm. It carries out the reaction D-ribose 5-phosphate + ATP = 5-phospho-alpha-D-ribose 1-diphosphate + AMP + H(+). It participates in metabolic intermediate biosynthesis; 5-phospho-alpha-D-ribose 1-diphosphate biosynthesis; 5-phospho-alpha-D-ribose 1-diphosphate from D-ribose 5-phosphate (route I): step 1/1. In terms of biological role, involved in the biosynthesis of the central metabolite phospho-alpha-D-ribosyl-1-pyrophosphate (PRPP) via the transfer of pyrophosphoryl group from ATP to 1-hydroxyl of ribose-5-phosphate (Rib-5-P). The chain is Ribose-phosphate pyrophosphokinase from Pyrococcus furiosus (strain ATCC 43587 / DSM 3638 / JCM 8422 / Vc1).